The sequence spans 161 residues: MSEFTHINEQGNAKMIDVSEKEITKRTATAHSSITVNQDIYQQIVDHTNKKGNVLNTAQIAGIMAAKNTSTIIPMCHPLSLTGIDIAFEWDTTSSYTLNIEATVSTSGKTGVEMEALTAASATALTVYDMTKALDKGMVIGETYLLTKSGGKSGDYRRESK.

Substrate-binding positions include M75–H77 and M114–E115. The active site involves D129.

The protein belongs to the MoaC family. As to quaternary structure, homohexamer; trimer of dimers.

The enzyme catalyses (8S)-3',8-cyclo-7,8-dihydroguanosine 5'-triphosphate = cyclic pyranopterin phosphate + diphosphate. It participates in cofactor biosynthesis; molybdopterin biosynthesis. In terms of biological role, catalyzes the conversion of (8S)-3',8-cyclo-7,8-dihydroguanosine 5'-triphosphate to cyclic pyranopterin monophosphate (cPMP). This is Cyclic pyranopterin monophosphate synthase from Staphylococcus carnosus (strain TM300).